The following is a 193-amino-acid chain: MDSRALPRPAPPAPGVPGCCAARRRPESPELLRCSRRRRPGAVDPGSGAAAVARRNERERNRVKLVNLGFQALRQHVPHGGASKKLSKVETLRSAVEYIRALQRLLAEHDAVRAALAGGLLAPAVRHPLPRAPSGTPATAASPSCASSSPGRGHSSEPGSPRSAYSSDDSGCEGALSPAERELLDFSSWLGGY.

Disordered regions lie at residues Met1 to Arg58 and Pro128 to Ser177. The bHLH domain maps to Ala50–Leu102. Low complexity predominate over residues Pro128–Arg152.

In terms of assembly, efficient DNA binding requires dimerization with another basic helix-loop-helix (bHLH) protein. Forms heterodimers with bHLH transcription factor TCF3. May not heterodimerise with bHLH protein HAND1. As to expression, expressed in placenta.

The protein localises to the nucleus. Functionally, transcription factor. Binds to E-box motifs 5'-CANNTG-3' in the regulatory elements of target genes, probably as a heterodimer with another basic helix-loop-helix (bHLH) protein such as the transcription factor TCF3. May bind both open and closed chromatin, acting as a pioneer transcription factor to allow other factors to bind and activate lineage-specific genes. Required during post-implantation development for the generation of some differentiated trophoblast cell types. Transcriptional activity of ASCL2 may be antagonised in a subset of trophoblast cells by bHLH transcription factor HAND1, perhaps by competing for dimerization with other bHLH proteins. Involved in differentiation and function of follicular T-helper (Tfh) cells, thereby playing a role in germinal center responses; probably modulates expression of genes involved in Tfh cell function, such as BCL6. May also act as a suppressor of Th1-, Th2- and Th17-cell differentiation. Induces the formation of stem cells in intestinal crypts in vitro, synergistically activating transcription of target genes, such as SOX9, together with TCF4/beta-catenin. May form a bistable transcriptional switch, controlling expression of its own gene together with Wnt/R-spondin signaling, and thereby maintaining stem cell characteristics. Modulates expression of target genes, including perhaps down-regulating EGR1/Krox24 and chemokine CXCL10/Mob-1 and up-regulating CXCR4 and CDKN1C/p57kip2, in Schwann cells. May play a role in reducing proliferation of Schwann cells, perhaps acting via modulation of expression of CDKN1C. May be dispensable for blastocyst formation and later embryonic function. May be involved in the determination of neuronal precursors. This chain is Achaete-scute homolog 2 (ASCL2), found in Bos taurus (Bovine).